The chain runs to 79 residues: uncharacterized protein (79 aa).

The N-terminal stretch at 1 to 33 is a signal peptide; that stretch reads MRLIIRAIVLLALVWIGLLMSGYGILVGSKVNA.

This is an uncharacterized protein from Salmonella typhi.